Consider the following 461-residue polypeptide: Bifunctional protein GlmU (461 aa).

The pyrophosphorylase stretch occupies residues 1-229; the sequence is MEKYVVVLAA…FSESLGVNDR (229 aa). UDP-N-acetyl-alpha-D-glucosamine is bound by residues 8–11, lysine 22, glutamine 72, and 77–78; these read LAAG and GT. Position 102 (aspartate 102) interacts with Mg(2+). UDP-N-acetyl-alpha-D-glucosamine contacts are provided by glycine 139, glutamate 154, asparagine 169, and asparagine 227. Asparagine 227 is a binding site for Mg(2+). Positions 230–250 are linker; it reads IALAEATRIMQRRINEGHMRD. The N-acetyltransferase stretch occupies residues 251–461; it reads GVTFIDPATA…LPLSEDEEWK (211 aa). UDP-N-acetyl-alpha-D-glucosamine is bound by residues arginine 332 and lysine 350. The active-site Proton acceptor is histidine 362. Positions 365 and 376 each coordinate UDP-N-acetyl-alpha-D-glucosamine. The acetyl-CoA site is built by alanine 422 and arginine 439.

The protein in the N-terminal section; belongs to the N-acetylglucosamine-1-phosphate uridyltransferase family. This sequence in the C-terminal section; belongs to the transferase hexapeptide repeat family. As to quaternary structure, homotrimer. Mg(2+) is required as a cofactor.

It is found in the cytoplasm. The enzyme catalyses alpha-D-glucosamine 1-phosphate + acetyl-CoA = N-acetyl-alpha-D-glucosamine 1-phosphate + CoA + H(+). It catalyses the reaction N-acetyl-alpha-D-glucosamine 1-phosphate + UTP + H(+) = UDP-N-acetyl-alpha-D-glucosamine + diphosphate. Its pathway is nucleotide-sugar biosynthesis; UDP-N-acetyl-alpha-D-glucosamine biosynthesis; N-acetyl-alpha-D-glucosamine 1-phosphate from alpha-D-glucosamine 6-phosphate (route II): step 2/2. It participates in nucleotide-sugar biosynthesis; UDP-N-acetyl-alpha-D-glucosamine biosynthesis; UDP-N-acetyl-alpha-D-glucosamine from N-acetyl-alpha-D-glucosamine 1-phosphate: step 1/1. It functions in the pathway bacterial outer membrane biogenesis; LPS lipid A biosynthesis. Functionally, catalyzes the last two sequential reactions in the de novo biosynthetic pathway for UDP-N-acetylglucosamine (UDP-GlcNAc). The C-terminal domain catalyzes the transfer of acetyl group from acetyl coenzyme A to glucosamine-1-phosphate (GlcN-1-P) to produce N-acetylglucosamine-1-phosphate (GlcNAc-1-P), which is converted into UDP-GlcNAc by the transfer of uridine 5-monophosphate (from uridine 5-triphosphate), a reaction catalyzed by the N-terminal domain. The polypeptide is Bifunctional protein GlmU (Lactobacillus delbrueckii subsp. bulgaricus (strain ATCC 11842 / DSM 20081 / BCRC 10696 / JCM 1002 / NBRC 13953 / NCIMB 11778 / NCTC 12712 / WDCM 00102 / Lb 14)).